The following is a 430-amino-acid chain: Retinoic acid receptor RXR-alpha-A (430 aa).

Over residues 1–20 the composition is skewed to low complexity; that stretch reads MHPSLLSPTSLGPSGSLHSP. Disordered regions lie at residues 1 to 25 and 48 to 73; these read MHPS…STLS and ASPG…SSSE. Residues 1–99 form a modulating region; the sequence is MHPSLLSPTS…QPSGTPLSLT (99 aa). Polar residues predominate over residues 58-72; that stretch reads ISPQLNSHMNSVSSS. Positions 100–175 form a DNA-binding region, nuclear receptor; that stretch reads KHICAICGDR…MGMKREAVQE (76 aa). Residues cysteine 103, cysteine 106, cysteine 120, and cysteine 123 each coordinate Zn(2+). An NR C4-type zinc finger spans residues 103-123; that stretch reads CAICGDRSSGKHYGVYSCEGC. The nuclear localization signal stretch occupies residues 128–133; that stretch reads KRTVRK. The Zn(2+) site is built by cysteine 139, cysteine 145, cysteine 155, and cysteine 158. The segment at 139-158 adopts an NR C4-type zinc-finger fold; the sequence is CRDNKDCVIDKRQRNRCQYC. The span at 174–186 shows a compositional bias: basic and acidic residues; that stretch reads QEERQRAKERSEN. The tract at residues 174 to 196 is disordered; it reads QEERQRAKERSENEVESTSSANE. The segment at 176 to 192 is hinge; sequence ERQRAKERSENEVESTS. Residues 195–426 form the NR LBD domain; that stretch reads NEDMPVEKIL…TFLMEMLEAP (232 aa). The 9-cis-retinoate site is built by arginine 284 and alanine 295. The all-trans-retinoate site is built by arginine 284 and alanine 295. The required for nuclear export stretch occupies residues 316–336; that stretch reads RVLTELVSKMRDMQMDKTELG. The AF-2 stretch occupies residues 415–426; that stretch reads IDTFLMEMLEAP.

The protein belongs to the nuclear hormone receptor family. NR2 subfamily. In terms of assembly, homodimer. Heterodimer; with a rar molecule. Binds DNA preferentially as a rar/rxr heterodimer.

The protein resides in the nucleus. Receptor for retinoic acid that acts as a transcription factor. Forms homo- or heterodimers with retinoic acid receptors (rars) and binds to target response elements in response to their ligands, all-trans or 9-cis retinoic acid, to regulate gene expression in various biological processes. The rar/rxr heterodimers bind to the retinoic acid response elements (RARE) composed of tandem 5'-AGGTCA-3' sites known as DR1-DR5 to regulate transcription. The high affinity ligand for rxrs is 9-cis retinoic acid. In the absence of ligand, the rar/rxr heterodimers associate with a multiprotein complex containing transcription corepressors that induce histone deacetylation, chromatin condensation and transcriptional suppression. On ligand binding, the corepressors dissociate from the receptors and coactivators are recruited leading to transcriptional activation. This chain is Retinoic acid receptor RXR-alpha-A, found in Danio rerio (Zebrafish).